The primary structure comprises 373 residues: Secondary metabolism regulator laeA (373 aa).

Disordered stretches follow at residues 1 to 21 (MFLNGQGGQRPPTVASPPLNV) and 53 to 81 (AAERDPAAGRWHANGSPSINSTSSKNPDR). Positions 67–77 (GSPSINSTSSK) are enriched in polar residues.

The protein belongs to the methyltransferase superfamily. LaeA methyltransferase family. As to quaternary structure, component of the heterotrimeric velvet complex composed of laeA, veA and velB; VeA acting as a bridging protein between laeA and velB.

The protein resides in the nucleus. The enzyme catalyses L-methionyl-[protein] + S-adenosyl-L-methionine = S-methyl-L-methionyl-[protein] + S-adenosyl-L-homocysteine. Its function is as follows. Methyltransferase that performs automethylation. No other methyl-accepting substrate has been identified yet. Component of the velvet transcription factor complex that acts as a global regulator for secondary metabolite gene expression. Controls the expression of the cyclopiazonic acid (CPA) gene clusters. Regulates also pigmentation and conidial head morphology. The protein is Secondary metabolism regulator laeA of Aspergillus fumisynnematus.